The following is a 136-amino-acid chain: Protein PsiE (136 aa).

4 consecutive transmembrane segments (helical) span residues 15–35 (ILQT…VVFL), 55–75 (YELV…ALIV), 82–102 (FHFP…RLII), and 108–128 (PLDV…LWLC).

This sequence belongs to the PsiE family.

Its subcellular location is the cell inner membrane. This Escherichia coli O17:K52:H18 (strain UMN026 / ExPEC) protein is Protein PsiE.